We begin with the raw amino-acid sequence, 227 residues long: PKHD-type hydroxylase Veis_3084 (227 aa).

The tract at residues 27-51 (DDGKDSAGTQARQAKNNQQLPRDSE) is disordered. Residues 33-47 (AGTQARQAKNNQQLP) are compositionally biased toward polar residues. Residues 78–179 (RVFPPRVNRY…RMACFFWVES (102 aa)) form the Fe2OG dioxygenase domain. Fe cation contacts are provided by H97, D99, and H160. R170 lines the 2-oxoglutarate pocket.

Fe(2+) serves as cofactor. It depends on L-ascorbate as a cofactor.

The chain is PKHD-type hydroxylase Veis_3084 from Verminephrobacter eiseniae (strain EF01-2).